A 118-amino-acid polypeptide reads, in one-letter code: Ribosome-binding factor A (118 aa).

The protein belongs to the RbfA family. As to quaternary structure, monomer. Binds 30S ribosomal subunits, but not 50S ribosomal subunits or 70S ribosomes.

It localises to the cytoplasm. In terms of biological role, one of several proteins that assist in the late maturation steps of the functional core of the 30S ribosomal subunit. Associates with free 30S ribosomal subunits (but not with 30S subunits that are part of 70S ribosomes or polysomes). Required for efficient processing of 16S rRNA. May interact with the 5'-terminal helix region of 16S rRNA. This chain is Ribosome-binding factor A, found in Bacillus cereus (strain AH820).